An 85-amino-acid polypeptide reads, in one-letter code: Toxin BmKaIT1 (85 aa).

A signal peptide spans 1–19; sequence MNYLVMISFAFLLMTGVES. One can recognise an LCN-type CS-alpha/beta domain in the interval 21-83; the sequence is RDAYIAQNYN…VPIRVPGKCH (63 aa). 4 disulfide bridges follow: Cys31–Cys82, Cys35–Cys55, Cys41–Cys65, and Cys45–Cys67. Positions 84–85 are cleaved as a propeptide — removed by a carboxypeptidase; that stretch reads RR.

Belongs to the long (4 C-C) scorpion toxin superfamily. Sodium channel inhibitor family. Alpha subfamily. In terms of tissue distribution, expressed by the venom gland.

Its subcellular location is the secreted. In terms of biological role, alpha toxins bind voltage-independently at site-3 of sodium channels (Nav) and inhibit the inactivation of the activated channels, thereby blocking neuronal transmission. Shows a high toxicity toward insects and moderate toxicity against mammals. The protein is Toxin BmKaIT1 of Olivierus martensii (Manchurian scorpion).